Reading from the N-terminus, the 316-residue chain is IDS-like terpene synthase 2 (316 aa).

Mg(2+) is bound by residues D69 and D73.

Belongs to the FPP/GGPP synthase family. Mg(2+) serves as cofactor.

It carries out the reaction (2E)-geranyl diphosphate + H2O = linalool + diphosphate. The catalysed reaction is (2E,6E)-farnesyl diphosphate + H2O = (6E)-nerolidol + diphosphate. In terms of biological role, terpene synthase that shows monoterpene synthase activity and produces linalool, using geranyl diphosphate (GPP) as substrate. Also shows sesquiterpene synthase activity as it is able to convert farnesyl diphosphate (FPP) into (E)-nerolidol. This is IDS-like terpene synthase 2 from Melampsora larici-populina (strain 98AG31 / pathotype 3-4-7) (Poplar leaf rust fungus).